The chain runs to 289 residues: Probable endonuclease 4 (289 aa).

Zn(2+)-binding residues include H75, H115, E153, D187, H190, H224, D237, H239, and E269.

The protein belongs to the AP endonuclease 2 family. The cofactor is Zn(2+).

The enzyme catalyses Endonucleolytic cleavage to 5'-phosphooligonucleotide end-products.. Functionally, endonuclease IV plays a role in DNA repair. It cleaves phosphodiester bonds at apurinic or apyrimidinic (AP) sites, generating a 3'-hydroxyl group and a 5'-terminal sugar phosphate. In Chlamydia abortus (strain DSM 27085 / S26/3) (Chlamydophila abortus), this protein is Probable endonuclease 4.